The following is a 277-amino-acid chain: 3-methyl-2-oxobutanoate hydroxymethyltransferase (277 aa).

Positions 42 and 81 each coordinate Mg(2+). Residues 42-43, Asp81, and Lys110 each bind 3-methyl-2-oxobutanoate; that span reads DS. Glu112 contributes to the Mg(2+) binding site. Residue Glu179 is the Proton acceptor of the active site.

It belongs to the PanB family. In terms of assembly, homodecamer; pentamer of dimers. It depends on Mg(2+) as a cofactor.

The protein localises to the cytoplasm. It carries out the reaction 3-methyl-2-oxobutanoate + (6R)-5,10-methylene-5,6,7,8-tetrahydrofolate + H2O = 2-dehydropantoate + (6S)-5,6,7,8-tetrahydrofolate. The protein operates within cofactor biosynthesis; (R)-pantothenate biosynthesis; (R)-pantoate from 3-methyl-2-oxobutanoate: step 1/2. In terms of biological role, catalyzes the reversible reaction in which hydroxymethyl group from 5,10-methylenetetrahydrofolate is transferred onto alpha-ketoisovalerate to form ketopantoate. The chain is 3-methyl-2-oxobutanoate hydroxymethyltransferase from Anaplasma marginale (strain St. Maries).